A 406-amino-acid polypeptide reads, in one-letter code: Tryptophan synthase beta chain (406 aa).

Lys-99 bears the N6-(pyridoxal phosphate)lysine mark.

The protein belongs to the TrpB family. As to quaternary structure, tetramer of two alpha and two beta chains. Requires pyridoxal 5'-phosphate as cofactor.

The catalysed reaction is (1S,2R)-1-C-(indol-3-yl)glycerol 3-phosphate + L-serine = D-glyceraldehyde 3-phosphate + L-tryptophan + H2O. Its pathway is amino-acid biosynthesis; L-tryptophan biosynthesis; L-tryptophan from chorismate: step 5/5. Its function is as follows. The beta subunit is responsible for the synthesis of L-tryptophan from indole and L-serine. The polypeptide is Tryptophan synthase beta chain (Chelativorans sp. (strain BNC1)).